The primary structure comprises 276 residues: Large ribosomal subunit protein uL2 (276 aa).

Disordered stretches follow at residues 36 to 58 and 214 to 276; these read PLHK…GGGH and LGKR…RRKK.

This sequence belongs to the universal ribosomal protein uL2 family. As to quaternary structure, part of the 50S ribosomal subunit. Forms a bridge to the 30S subunit in the 70S ribosome.

Its function is as follows. One of the primary rRNA binding proteins. Required for association of the 30S and 50S subunits to form the 70S ribosome, for tRNA binding and peptide bond formation. It has been suggested to have peptidyltransferase activity; this is somewhat controversial. Makes several contacts with the 16S rRNA in the 70S ribosome. This Halalkalibacterium halodurans (strain ATCC BAA-125 / DSM 18197 / FERM 7344 / JCM 9153 / C-125) (Bacillus halodurans) protein is Large ribosomal subunit protein uL2.